The primary structure comprises 124 residues: MVTINQLVGNARSIRVVKSSVPALESCPQKRGVCIRVYTTTPKKPNSALRKVCRVRLTNGLEVTCYIGGEGHNLQEHASILIRGGRVKDLPGVRYHVVRGALDCSGVKDRKNGRSKYGTKKLKS.

A 3-methylthioaspartic acid modification is found at D89.

The protein belongs to the universal ribosomal protein uS12 family. Part of the 30S ribosomal subunit. Contacts proteins S8 and S17. May interact with IF1 in the 30S initiation complex.

Functionally, with S4 and S5 plays an important role in translational accuracy. Interacts with and stabilizes bases of the 16S rRNA that are involved in tRNA selection in the A site and with the mRNA backbone. Located at the interface of the 30S and 50S subunits, it traverses the body of the 30S subunit contacting proteins on the other side and probably holding the rRNA structure together. The combined cluster of proteins S8, S12 and S17 appears to hold together the shoulder and platform of the 30S subunit. The sequence is that of Small ribosomal subunit protein uS12 from Blochmanniella floridana.